The chain runs to 222 residues: Collectrin (222 aa).

The first 14 residues, 1 to 14 (MLWALFFLVTTIHA), serve as a signal peptide directing secretion. Topologically, residues 15–141 (ELCHPDAENA…LAPPMEPSVP (127 aa)) are extracellular. The region spanning 21–222 (AENAFKVRLS…LTEDERLTPL (202 aa)) is the Collectrin-like domain. N-linked (GlcNAc...) asparagine glycans are attached at residues Asn76 and Asn93. A helical transmembrane segment spans residues 142–162 (VWIIVFGVIFCIVTVAIALLV). The Cytoplasmic segment spans residues 163-222 (LSGIRQRRRNNKGPPGVEDAEDKCENIITIENGIPCDPLDMKGGHINDGFLTEDERLTPL). 2 positions are modified to phosphothreonine: Thr214 and Thr220.

It belongs to the CLTRN family. As to quaternary structure, monomer. Homodimer. Homodimer; dimerization prevents CLTRN cleavage by BACE2. Interacts with SNAPIN. Interacts with SLC6A18; this interaction regulates the trafficking of SLC6A18 to the cell membrane and its amino acid transporter activity. Interacts with SLC6A19; this interaction regulates the trafficking of SLC6A19 to the cell membrane and its amino acid transporter activity. Interacts with SLC6A20B. Glycosylated. Glycosylation is required for plasma membrane localization and for its cleavage by BACE2. In terms of processing, proteolytically processed in pancreatic beta cells by BACE2 leading to the generation and extracellular release of soluble CLTRN, and a corresponding cell-associated C-terminal fragment which is later cleaved by gamma-secretase. This shedding process inactivates CLTRN. Three cleavage sites have been identified for BACE2, two clustered sites after Phe-116 and Leu-118 and a more membrane proximal site at Phe-125; the preferred BACE2 cleavage site seems to be between Phe-125 and Leu-126, Phe-116 and Leu-118 act as alternative sites. Expressed on the apical surface of the proximal tubules in the renal cortex (at protein level). Kidney; collecting ducts and proximal tubule. Pancreas; beta cells of islets. Expressed in the cerebral cortex, hippocampus, brainstem and cerebellum.

The protein localises to the cell membrane. Plays an important role in amino acid transport by acting as binding partner of amino acid transporters SLC6A18 and SLC6A19, regulating their trafficking on the cell surface and their activity. May also play a role in trafficking of amino acid transporters SLC3A1 and SLC7A9 to the renal cortical cell membrane. Regulator of SNARE complex function. Stimulator of beta cell replication. The sequence is that of Collectrin from Mus musculus (Mouse).